The sequence spans 404 residues: Serine/threonine transporter SstT (404 aa).

Transmembrane regions (helical) follow at residues 11–31 (IINA…IILA), 44–64 (LGGL…FVLV), 82–102 (IISL…TMSF), 144–164 (TANY…LHHA), 179–199 (VSFI…GLVA), 218–238 (GVLL…MVFI), 290–310 (IPLG…VLTL), 316–336 (MGIQ…AISA), and 363–383 (VAMQ…SAET).

It belongs to the dicarboxylate/amino acid:cation symporter (DAACS) (TC 2.A.23) family.

Its subcellular location is the cell inner membrane. It catalyses the reaction L-serine(in) + Na(+)(in) = L-serine(out) + Na(+)(out). The catalysed reaction is L-threonine(in) + Na(+)(in) = L-threonine(out) + Na(+)(out). Its function is as follows. Involved in the import of serine and threonine into the cell, with the concomitant import of sodium (symport system). The chain is Serine/threonine transporter SstT from Desulfotalea psychrophila (strain LSv54 / DSM 12343).